Consider the following 209-residue polypeptide: Protein-L-isoaspartate O-methyltransferase (209 aa).

Ser59 is an active-site residue.

It belongs to the methyltransferase superfamily. L-isoaspartyl/D-aspartyl protein methyltransferase family.

Its subcellular location is the cytoplasm. The catalysed reaction is [protein]-L-isoaspartate + S-adenosyl-L-methionine = [protein]-L-isoaspartate alpha-methyl ester + S-adenosyl-L-homocysteine. Catalyzes the methyl esterification of L-isoaspartyl residues in peptides and proteins that result from spontaneous decomposition of normal L-aspartyl and L-asparaginyl residues. It plays a role in the repair and/or degradation of damaged proteins. This Helicobacter pylori (strain G27) protein is Protein-L-isoaspartate O-methyltransferase.